The primary structure comprises 209 residues: Probable glutathione peroxidase 8-A (209 aa).

The helical transmembrane segment at 18–40 (VSVVFLSMLLCTGILCVLQLGFL) threads the bilayer. The active site involves cysteine 79.

This sequence belongs to the glutathione peroxidase family.

The protein localises to the membrane. It carries out the reaction 2 glutathione + H2O2 = glutathione disulfide + 2 H2O. This chain is Probable glutathione peroxidase 8-A (gpx8-a), found in Xenopus laevis (African clawed frog).